A 416-amino-acid polypeptide reads, in one-letter code: Neurotensin receptor type 2 (416 aa).

Topologically, residues 1–32 (METSSLWPPRPSPSAGLSLEARLGVDTRLWAK) are extracellular. The chain crosses the membrane as a helical span at residues 33–55 (VLFTALYSLIFALGTAGNALSVH). Residues 56–64 (VVLKARAGR) are Cytoplasmic-facing. A helical transmembrane segment spans residues 65–87 (PGRLRYHVLSLALSALLLLLISV). The Extracellular segment spans residues 88–109 (PMELYNFVWSHYPWVFGDLGCR). An intrachain disulfide couples cysteine 108 to cysteine 194. A helical membrane pass occupies residues 110-131 (GYYFVRELCAYATVLSVASLSA). Topologically, residues 132 to 154 (ERCLAVCQPLRARRLLTPRRTRR) are cytoplasmic. A helical membrane pass occupies residues 155 to 176 (LLSLVWVASLGLALPMAVIMGQ). At 177 to 217 (KHEMERADGEPEPASRVCTVLVSRATLQVFIQVNVLVSFVL) the chain is on the extracellular side. Residues 218–237 (PLALTAFLNGITVNHLVALY) form a helical membrane-spanning segment. The Cytoplasmic portion of the chain corresponds to 238–297 (SQVPSASAQVNSIPSRLELLSEEGLLGFITWRKTLSLGVQASLVRHKDASQIRSLQHSAQ). The chain crosses the membrane as a helical span at residues 298-318 (VLRAIVAVYVICWLPYHARRL). At 319–337 (MYCYIPDDGWTDELYDFYH) the chain is on the extracellular side. A helical membrane pass occupies residues 338–358 (YFYMVTNTLFYVSSAVTPVLY). The Cytoplasmic segment spans residues 359–416 (NAVSSSFRKLFLESLSSLCGEQRSVVPLPQEAPESTTSTYSFRLWGSPRNPSLGEIQV). Cysteine 377 carries S-palmitoyl cysteine lipidation. Serine 410 carries the phosphoserine modification.

This sequence belongs to the G-protein coupled receptor 1 family. Neurotensin receptor subfamily. NTSR2 sub-subfamily. As to expression, expressed maximally in the cerebellum, hippocampus, piriform cortex and neocortex of adult brain.

The protein localises to the cell membrane. Its function is as follows. Receptor for the tridecapeptide neurotensin. It is associated with G proteins that activate a phosphatidylinositol-calcium second messenger system. In Mus musculus (Mouse), this protein is Neurotensin receptor type 2 (Ntsr2).